The following is a 219-amino-acid chain: Uracil-DNA glycosylase (219 aa).

The active-site Proton acceptor is Asp-64.

It belongs to the uracil-DNA glycosylase (UDG) superfamily. UNG family.

The protein localises to the cytoplasm. It catalyses the reaction Hydrolyzes single-stranded DNA or mismatched double-stranded DNA and polynucleotides, releasing free uracil.. Excises uracil residues from the DNA which can arise as a result of misincorporation of dUMP residues by DNA polymerase or due to deamination of cytosine. In Leuconostoc citreum (strain KM20), this protein is Uracil-DNA glycosylase.